The following is a 463-amino-acid chain: Quinolone resistance protein NorB (463 aa).

The next 14 membrane-spanning stretches (helical) occupy residues 19–39 (IVLS…VVLI), 53–73 (IAVS…GGLA), 86–106 (IILN…LLLI), 107–127 (IGRL…LSII), 142–162 (YWSI…GAVA), 165–185 (LGWR…LFLI), 201–221 (FDIK…ILIT), 230–250 (SLLF…FIVL), 273–293 (TASN…NTFV), 299–319 (YSLL…LIMI), 334–354 (PMLI…LTFL), 357–377 (ILYV…LGIY), 403–423 (MASA…YAIV), and 435–455 (IALW…LLLV).

This sequence belongs to the major facilitator superfamily. TCR/Tet family.

Its subcellular location is the cell membrane. In terms of biological role, multidrug efflux pump that acts independently of NorA and is one of the factors that confers resistance against diverse quinolones and chemical compounds. The chain is Quinolone resistance protein NorB (norB) from Staphylococcus aureus (strain bovine RF122 / ET3-1).